Consider the following 347-residue polypeptide: NADH-ubiquinone oxidoreductase chain 2 (347 aa).

The next 11 helical transmembrane spans lie at 3–23, 25–45, 59–79, 96–116, 122–142, 149–169, 178–198, 201–221, 237–257, 274–294, and 326–346; these read PLIF…VMTT, HWVM…PILM, YFLT…INLT, IIMT…FWVP, VQLS…MSIL, INLD…GWGG, ILAY…VYNP, ALLN…MLMV, MPLL…LPPL, DSMI…YFYM, and LSPL…LALL.

This sequence belongs to the complex I subunit 2 family. As to quaternary structure, core subunit of respiratory chain NADH dehydrogenase (Complex I) which is composed of 45 different subunits. Interacts with TMEM242.

It localises to the mitochondrion inner membrane. It carries out the reaction a ubiquinone + NADH + 5 H(+)(in) = a ubiquinol + NAD(+) + 4 H(+)(out). Its function is as follows. Core subunit of the mitochondrial membrane respiratory chain NADH dehydrogenase (Complex I) which catalyzes electron transfer from NADH through the respiratory chain, using ubiquinone as an electron acceptor. Essential for the catalytic activity and assembly of complex I. The sequence is that of NADH-ubiquinone oxidoreductase chain 2 from Nyctimene aello (Broad-striped tube-nosed fruit bat).